Reading from the N-terminus, the 349-residue chain is Hyaluronidase Tab y 2.0101 (349 aa).

An N-terminal signal peptide occupies residues 1–25 (MKLHQGLVCLSVLILLPTCILGDRK). 2 disulfide bridges follow: Cys37–Cys328 and Cys205–Cys216. N-linked (GlcNAc...) asparagine glycosylation is found at Asn41, Asn81, Asn99, and Asn119. Catalysis depends on Glu129, which acts as the Proton donor. The N-linked (GlcNAc...) asparagine glycan is linked to Asn147. Residues Asn251 and Asn297 are each glycosylated (N-linked (GlcNAc...) asparagine).

Belongs to the glycosyl hydrolase 56 family. Expressed in salivary glands.

It localises to the secreted. The catalysed reaction is Random hydrolysis of (1-&gt;4)-linkages between N-acetyl-beta-D-glucosamine and D-glucuronate residues in hyaluronate.. Functionally, hydrolyzes high molecular weight hyaluronic acid to produce small oligosaccharides. This Tabanus yao (Horsefly) protein is Hyaluronidase Tab y 2.0101.